The sequence spans 870 residues: Probable coatomer subunit gamma (870 aa).

HEAT repeat units follow at residues 60–97, 99–133, 168–205, 278–315, 316–350, and 389–425; these read TEAT…VSDD, IIVT…TGML, EVVR…NDRL, SEIQ…AHPN, AVMS…GAES, and HTVM…ENPD.

It belongs to the COPG family. As to quaternary structure, oligomeric complex that consists of at least the alpha, beta, beta', gamma, delta, epsilon and zeta subunits.

It is found in the cytoplasm. It localises to the golgi apparatus membrane. The protein localises to the cytoplasmic vesicle. The protein resides in the COPI-coated vesicle membrane. Its function is as follows. The coatomer is a cytosolic protein complex that binds to dilysine motifs and reversibly associates with Golgi non-clathrin-coated vesicles, which further mediate biosynthetic protein transport from the ER, via the Golgi up to the trans Golgi network. Coatomer complex is required for budding from Golgi membranes, and is essential for the retrograde Golgi-to-ER transport of dilysine-tagged proteins. This is Probable coatomer subunit gamma from Caenorhabditis elegans.